Consider the following 193-residue polypeptide: Peptidyl-tRNA hydrolase (193 aa).

Tyrosine 16 provides a ligand contact to tRNA. Residue histidine 21 is the Proton acceptor of the active site. TRNA-binding residues include phenylalanine 66, asparagine 68, and asparagine 114.

Belongs to the PTH family. In terms of assembly, monomer.

Its subcellular location is the cytoplasm. The catalysed reaction is an N-acyl-L-alpha-aminoacyl-tRNA + H2O = an N-acyl-L-amino acid + a tRNA + H(+). In terms of biological role, hydrolyzes ribosome-free peptidyl-tRNAs (with 1 or more amino acids incorporated), which drop off the ribosome during protein synthesis, or as a result of ribosome stalling. Its function is as follows. Catalyzes the release of premature peptidyl moieties from peptidyl-tRNA molecules trapped in stalled 50S ribosomal subunits, and thus maintains levels of free tRNAs and 50S ribosomes. This is Peptidyl-tRNA hydrolase from Pelobacter propionicus (strain DSM 2379 / NBRC 103807 / OttBd1).